A 297-amino-acid chain; its full sequence is Phosphoribosylaminoimidazole-succinocarboxamide synthase (297 aa).

Belongs to the SAICAR synthetase family.

The enzyme catalyses 5-amino-1-(5-phospho-D-ribosyl)imidazole-4-carboxylate + L-aspartate + ATP = (2S)-2-[5-amino-1-(5-phospho-beta-D-ribosyl)imidazole-4-carboxamido]succinate + ADP + phosphate + 2 H(+). Its pathway is purine metabolism; IMP biosynthesis via de novo pathway; 5-amino-1-(5-phospho-D-ribosyl)imidazole-4-carboxamide from 5-amino-1-(5-phospho-D-ribosyl)imidazole-4-carboxylate: step 1/2. The sequence is that of Phosphoribosylaminoimidazole-succinocarboxamide synthase from Mycobacteroides abscessus (strain ATCC 19977 / DSM 44196 / CCUG 20993 / CIP 104536 / JCM 13569 / NCTC 13031 / TMC 1543 / L948) (Mycobacterium abscessus).